Reading from the N-terminus, the 137-residue chain is MKRLEKISSIVPILLRITLNLALIMVGFTLVAFLIREAFTIFNNIFFLDTDVSYYYMTQDILTFFLYFEFIALIVKYFESHFHFPLRYFIYIGITAIIRFIIVDHSSATSTLILSGAILLLVAALFLANTKMLKREG.

4 consecutive transmembrane segments (helical) span residues 13-35, 55-77, 84-103, and 107-129; these read ILLR…AFLI, YYMT…IVKY, FPLR…FIIV, and SATS…FLAN.

Belongs to the PsiE family.

It localises to the cell membrane. In Listeria monocytogenes serotype 4b (strain F2365), this protein is Protein PsiE homolog.